The primary structure comprises 72 residues: Translation initiation factor IF-1 (72 aa).

One can recognise an S1-like domain in the interval 1 to 72 (MTKEENIEMQ…SKGRIIFRSR (72 aa)).

Belongs to the IF-1 family. Component of the 30S ribosomal translation pre-initiation complex which assembles on the 30S ribosome in the order IF-2 and IF-3, IF-1 and N-formylmethionyl-tRNA(fMet); mRNA recruitment can occur at any time during PIC assembly.

The protein localises to the cytoplasm. In terms of biological role, one of the essential components for the initiation of protein synthesis. Stabilizes the binding of IF-2 and IF-3 on the 30S subunit to which N-formylmethionyl-tRNA(fMet) subsequently binds. Helps modulate mRNA selection, yielding the 30S pre-initiation complex (PIC). Upon addition of the 50S ribosomal subunit IF-1, IF-2 and IF-3 are released leaving the mature 70S translation initiation complex. The protein is Translation initiation factor IF-1 of Wigglesworthia glossinidia brevipalpis.